The primary structure comprises 227 residues: Octanoyltransferase (227 aa).

The region spanning 31–209 is the BPL/LPL catalytic domain; the sequence is ANTIDEIWLV…VFLSLLGGTN (179 aa). Residues 71–78, 139–141, and 152–154 contribute to the substrate site; these read RGGKITYH, SIG, and GLA. The Acyl-thioester intermediate role is filled by C170.

Belongs to the LipB family.

It localises to the cytoplasm. The enzyme catalyses octanoyl-[ACP] + L-lysyl-[protein] = N(6)-octanoyl-L-lysyl-[protein] + holo-[ACP] + H(+). Its pathway is protein modification; protein lipoylation via endogenous pathway; protein N(6)-(lipoyl)lysine from octanoyl-[acyl-carrier-protein]: step 1/2. Its function is as follows. Catalyzes the transfer of endogenously produced octanoic acid from octanoyl-acyl-carrier-protein onto the lipoyl domains of lipoate-dependent enzymes. Lipoyl-ACP can also act as a substrate although octanoyl-ACP is likely to be the physiological substrate. This chain is Octanoyltransferase, found in Baumannia cicadellinicola subsp. Homalodisca coagulata.